We begin with the raw amino-acid sequence, 93 residues long: UPF0367 protein tsr0804 (93 aa).

It belongs to the UPF0367 family.

This Thermosynechococcus vestitus (strain NIES-2133 / IAM M-273 / BP-1) protein is UPF0367 protein tsr0804.